The following is a 223-amino-acid chain: 7-cyano-7-deazaguanine synthase (223 aa).

Position 15 to 25 (15 to 25 (FSGGQDSTTCL)) interacts with ATP. Zn(2+) is bound by residues Cys-191, Cys-200, Cys-203, and Cys-206.

Belongs to the QueC family. In terms of assembly, homodimer. It depends on Zn(2+) as a cofactor.

The catalysed reaction is 7-carboxy-7-deazaguanine + NH4(+) + ATP = 7-cyano-7-deazaguanine + ADP + phosphate + H2O + H(+). The protein operates within purine metabolism; 7-cyano-7-deazaguanine biosynthesis. Catalyzes the ATP-dependent conversion of 7-carboxy-7-deazaguanine (CDG) to 7-cyano-7-deazaguanine (preQ(0)). This is 7-cyano-7-deazaguanine synthase from Staphylococcus saprophyticus subsp. saprophyticus (strain ATCC 15305 / DSM 20229 / NCIMB 8711 / NCTC 7292 / S-41).